A 333-amino-acid chain; its full sequence is Lipoyl synthase (333 aa).

[4Fe-4S] cluster-binding residues include cysteine 55, cysteine 60, cysteine 66, cysteine 81, cysteine 85, cysteine 88, and serine 292. Residues 67–281 enclose the Radical SAM core domain; the sequence is WEDREATFLI…SAEAERLGFA (215 aa).

This sequence belongs to the radical SAM superfamily. Lipoyl synthase family. The cofactor is [4Fe-4S] cluster.

The protein localises to the cytoplasm. It carries out the reaction [[Fe-S] cluster scaffold protein carrying a second [4Fe-4S](2+) cluster] + N(6)-octanoyl-L-lysyl-[protein] + 2 oxidized [2Fe-2S]-[ferredoxin] + 2 S-adenosyl-L-methionine + 4 H(+) = [[Fe-S] cluster scaffold protein] + N(6)-[(R)-dihydrolipoyl]-L-lysyl-[protein] + 4 Fe(3+) + 2 hydrogen sulfide + 2 5'-deoxyadenosine + 2 L-methionine + 2 reduced [2Fe-2S]-[ferredoxin]. Its pathway is protein modification; protein lipoylation via endogenous pathway; protein N(6)-(lipoyl)lysine from octanoyl-[acyl-carrier-protein]: step 2/2. Functionally, catalyzes the radical-mediated insertion of two sulfur atoms into the C-6 and C-8 positions of the octanoyl moiety bound to the lipoyl domains of lipoate-dependent enzymes, thereby converting the octanoylated domains into lipoylated derivatives. The polypeptide is Lipoyl synthase (Kineococcus radiotolerans (strain ATCC BAA-149 / DSM 14245 / SRS30216)).